Here is a 3767-residue protein sequence, read N- to C-terminus: Transmembrane cell adhesion receptor mua-3 (3767 aa).

A signal peptide spans 1 to 24 (MQAGISIFFLFLHIPIFFVNCSNS). Residues 25 to 3417 (TSCVAREEFQ…CQVAPSNASL (3393 aa)) lie on the Extracellular side of the membrane. One can recognise an LDL-receptor class A 1 domain in the interval 26–63 (SCVAREEFQCKMDDSCISMKKWQDGVDDCYDGSDEVCL). 10 cysteine pairs are disulfide-bonded: cysteine 27–cysteine 41, cysteine 35–cysteine 54, cysteine 62–cysteine 76, cysteine 69–cysteine 89, cysteine 97–cysteine 110, cysteine 104–cysteine 123, cysteine 131–cysteine 144, cysteine 138–cysteine 157, cysteine 165–cysteine 179, and cysteine 172–cysteine 192. LDL-receptor class A domains lie at 96-132 (GCPA…EPCA), 133-166 (QNQF…EECT), and 167-209 (TSQF…ANCT). N-linked (GlcNAc...) asparagine glycans are attached at residues asparagine 201 and asparagine 207. EGF-like domains lie at 225-268 (KLKF…DKCI), 375-416 (NRDD…GTCR), 418-466 (LIDE…RKCR), 468-517 (LINE…RNCT), 519-566 (AINE…RKCV), 614-663 (RANP…RKCV), 665-713 (AVDE…RSCK), 714-760 (KADM…RVCR), 762-810 (VVNE…KNCV), 816-860 (DPPE…GRCV), 861-908 (VINE…RICR), 910-961 (RVNE…RRCI), 963-1012 (AVNE…RICT), 1029-1070 (TDDG…GSCR), 1071-1118 (VYSA…RICK), 1120-1168 (LINE…RQCT), and 1170-1219 (SNNE…RVCT). Cystine bridges form between cysteine 229-cysteine 243, cysteine 235-cysteine 252, cysteine 254-cysteine 267, cysteine 381-cysteine 392, cysteine 386-cysteine 402, cysteine 404-cysteine 415, cysteine 422-cysteine 435, cysteine 429-cysteine 444, cysteine 446-cysteine 465, cysteine 472-cysteine 486, cysteine 480-cysteine 495, cysteine 497-cysteine 516, cysteine 523-cysteine 536, cysteine 530-cysteine 545, cysteine 547-cysteine 565, cysteine 618-cysteine 632, cysteine 626-cysteine 642, cysteine 644-cysteine 662, cysteine 669-cysteine 682, cysteine 676-cysteine 691, cysteine 693-cysteine 712, cysteine 718-cysteine 729, cysteine 723-cysteine 738, cysteine 740-cysteine 759, cysteine 766-cysteine 779, cysteine 773-cysteine 788, cysteine 790-cysteine 809, cysteine 820-cysteine 836, cysteine 828-cysteine 845, cysteine 847-cysteine 859, cysteine 865-cysteine 879, cysteine 873-cysteine 888, cysteine 890-cysteine 907, cysteine 914-cysteine 930, cysteine 924-cysteine 939, cysteine 941-cysteine 960, cysteine 967-cysteine 981, cysteine 975-cysteine 990, cysteine 992-cysteine 1011, cysteine 1033-cysteine 1046, cysteine 1040-cysteine 1055, cysteine 1057-cysteine 1069, cysteine 1075-cysteine 1087, cysteine 1081-cysteine 1096, cysteine 1098-cysteine 1117, cysteine 1124-cysteine 1137, cysteine 1131-cysteine 1146, cysteine 1148-cysteine 1167, cysteine 1174-cysteine 1188, cysteine 1182-cysteine 1197, and cysteine 1199-cysteine 1218. Asparagine 383 is a glycosylation site (N-linked (GlcNAc...) asparagine). Asparagine 515 is a glycosylation site (N-linked (GlcNAc...) asparagine). The VWFA domain occupies 1230 to 1406 (DLVFLIDGSG…DLDTRLRSMI (177 aa)). An N-linked (GlcNAc...) asparagine glycan is attached at asparagine 1350. EGF-like domains lie at 1421–1466 (SEDV…RVCG), 1466–1510 (GGDL…GFCV), 1521–1562 (HDAN…GQCA), 1563–1608 (YPGS…DICL), 1608–1656 (LKNE…RVCV), 1658–1706 (LQNE…MVCK), 1708–1755 (LVNE…RRCE), 1759–1807 (TNDK…RLCI), 1809–1860 (VIPE…RLCK), 1862–1911 (LQNE…RKCK), 1913–1961 (LINE…RRCL), 1963–2011 (RINE…RICR), 2014–2062 (LVDE…RLCQ), 2068–2112 (PPPE…GSCS), 2113–2160 (IINE…RMCK), 2162–2208 (MVNE…RICK), 2210–2258 (LTNE…RACR), 2260–2308 (LVNE…RVCL), 2310–2358 (FINE…RVCV), 2360–2408 (LVDE…RVCS), 2409–2455 (APEV…RVCV), 2456–2504 (RNNA…RVCE), 2513–2563 (PRHP…RLCV), 2565–2616 (TEPV…RICK), 2618–2666 (LINE…RICS), 2668–2714 (SVNE…HRCS), 2716–2763 (MINE…RICR), 2763–2811 (RLNE…RICI), and 2833–2872 (REFP…GKCQ). Cystine bridges form between cysteine 1425/cysteine 1441, cysteine 1433/cysteine 1450, cysteine 1452/cysteine 1465, cysteine 1470/cysteine 1484, cysteine 1478/cysteine 1494, cysteine 1496/cysteine 1509, cysteine 1525/cysteine 1538, cysteine 1532/cysteine 1547, cysteine 1549/cysteine 1561, cysteine 1567/cysteine 1583, cysteine 1575/cysteine 1592, cysteine 1594/cysteine 1607, cysteine 1612/cysteine 1625, cysteine 1619/cysteine 1634, cysteine 1636/cysteine 1655, cysteine 1662/cysteine 1675, cysteine 1669/cysteine 1684, cysteine 1686/cysteine 1705, cysteine 1712/cysteine 1726, cysteine 1720/cysteine 1735, cysteine 1737/cysteine 1754, cysteine 1763/cysteine 1776, cysteine 1770/cysteine 1786, cysteine 1788/cysteine 1806, cysteine 1813/cysteine 1829, cysteine 1821/cysteine 1838, cysteine 1840/cysteine 1859, cysteine 1866/cysteine 1880, cysteine 1873/cysteine 1889, cysteine 1891/cysteine 1910, cysteine 1917/cysteine 1930, cysteine 1924/cysteine 1939, cysteine 1941/cysteine 1960, cysteine 1967/cysteine 1980, cysteine 1974/cysteine 1989, cysteine 1991/cysteine 2010, cysteine 2018/cysteine 2031, cysteine 2025/cysteine 2040, cysteine 2042/cysteine 2061, cysteine 2072/cysteine 2088, cysteine 2080/cysteine 2097, cysteine 2099/cysteine 2111, cysteine 2117/cysteine 2131, cysteine 2125/cysteine 2140, cysteine 2142/cysteine 2159, cysteine 2166/cysteine 2180, cysteine 2174/cysteine 2189, cysteine 2191/cysteine 2207, cysteine 2214/cysteine 2228, cysteine 2222/cysteine 2237, cysteine 2239/cysteine 2257, cysteine 2264/cysteine 2278, cysteine 2272/cysteine 2287, cysteine 2289/cysteine 2307, cysteine 2314/cysteine 2327, cysteine 2321/cysteine 2336, cysteine 2338/cysteine 2357, cysteine 2364/cysteine 2377, cysteine 2371/cysteine 2386, cysteine 2388/cysteine 2407, cysteine 2413/cysteine 2425, cysteine 2419/cysteine 2435, cysteine 2437/cysteine 2454, cysteine 2460/cysteine 2474, cysteine 2468/cysteine 2483, and cysteine 2485/cysteine 2503. The segment at 2492–2521 (RSPDSSQRGRVCEPPPPPSPPPRHPCQDPE) is disordered. Positions 2504–2515 (EPPPPPSPPPRH) are enriched in pro residues. 21 disulfides stabilise this stretch: cysteine 2517/cysteine 2531, cysteine 2525/cysteine 2541, cysteine 2543/cysteine 2562, cysteine 2569/cysteine 2583, cysteine 2577/cysteine 2594, cysteine 2596/cysteine 2615, cysteine 2622/cysteine 2636, cysteine 2630/cysteine 2645, cysteine 2647/cysteine 2665, cysteine 2672/cysteine 2686, cysteine 2680/cysteine 2695, cysteine 2697/cysteine 2713, cysteine 2720/cysteine 2734, cysteine 2728/cysteine 2743, cysteine 2745/cysteine 2762, cysteine 2767/cysteine 2781, cysteine 2775/cysteine 2790, cysteine 2792/cysteine 2810, cysteine 2837/cysteine 2850, cysteine 2842/cysteine 2856, and cysteine 2858/cysteine 2871. The SEA 1 domain maps to 2873-2999 (EVQETPFELR…GSLRVASDTD (127 aa)). Asparagine 2944 carries an N-linked (GlcNAc...) asparagine glycan. The EGF-like 47 domain maps to 3009-3048 (EWGNCGGMSCKEHLKEVCIAGHICGCPDGMKRRDANSECR). Disulfide bonds link cysteine 3013–cysteine 3026, cysteine 3018–cysteine 3032, and cysteine 3034–cysteine 3047. The 126-residue stretch at 3049–3174 (VVESWNVPLW…SELYLNPTQP (126 aa)) folds into the SEA 2 domain. N-linked (GlcNAc...) asparagine glycosylation is found at asparagine 3120 and asparagine 3130. EGF-like domains lie at 3176 to 3220 (PFNP…KKCL), 3224 to 3272 (GFNE…SLCV), and 3272 to 3324 (VLDY…TLCM). 15 disulfides stabilise this stretch: cysteine 3180–cysteine 3191, cysteine 3185–cysteine 3201, cysteine 3203–cysteine 3219, cysteine 3228–cysteine 3242, cysteine 3236–cysteine 3251, cysteine 3253–cysteine 3271, cysteine 3276–cysteine 3288, cysteine 3282–cysteine 3297, cysteine 3299–cysteine 3323, cysteine 3332–cysteine 3345, cysteine 3339–cysteine 3354, cysteine 3356–cysteine 3372, cysteine 3377–cysteine 3386, cysteine 3380–cysteine 3397, and cysteine 3399–cysteine 3408. Residue asparagine 3285 is glycosylated (N-linked (GlcNAc...) asparagine). An EGF-like 51; calcium-binding domain is found at 3328-3373 (DVDECALGLNNCSGVAHCIDRAVGYTCKCPDGYIDGNPDEPGRVCG). Residue asparagine 3337 is glycosylated (N-linked (GlcNAc...) asparagine; atypical). Residue asparagine 3338 is glycosylated (N-linked (GlcNAc...) asparagine). The 37-residue stretch at 3373-3409 (GALLCDLCNAHGDCVHNTATNNITCVCTDGWTGPQCQ) folds into the EGF-like 52 domain. Residue asparagine 3394 is glycosylated (N-linked (GlcNAc...) asparagine). The N-linked (GlcNAc...) asparagine glycan is linked to asparagine 3414. The helical transmembrane segment at 3418 to 3438 (VLLILLALLFLLLTLCCLLYF) threads the bilayer. Topologically, residues 3439–3767 (CTKCHCFKGR…SQTSTHVTKK (329 aa)) are cytoplasmic. A disordered region spans residues 3582-3729 (TTTTDEQGNT…EEDVEHSVGD (148 aa)). Over residues 3588–3597 (QGNTIVTTTE) the composition is skewed to polar residues. Over residues 3630 to 3665 (QSQSQQQQSMSQGMSQSMSQHATSAGYSSSGMESSA) the composition is skewed to low complexity. Positions 3675 to 3684 (HTGERERGGS) are enriched in basic and acidic residues. Residues 3690–3702 (IGRARGMAAASSG) show a composition bias toward low complexity.

In terms of tissue distribution, expressed in the hypodermis at the sites of muscle contact, in striated muscles including body wall muscles, the anal sphincter muscles and the junctions between the anal sphincter muscle and rectal cuticle. Also expressed in non-muscle cells including the excretory duct cell and pore cells.

Its subcellular location is the cell membrane. It localises to the cell junction. The protein localises to the hemidesmosome. Involved in cell adhesion and required for organ positioning and attachment. At the hypodermal surface, required for attachment of the hypdermermis to the basal cuticle in postembryonic development, possibly through intermediate filaments of the cytoskeleton. This Caenorhabditis elegans protein is Transmembrane cell adhesion receptor mua-3.